The sequence spans 311 residues: p-hydroxybenzoic acid efflux pump subunit AaeA (311 aa).

A helical transmembrane segment spans residues Ile-11–Phe-31.

It belongs to the membrane fusion protein (MFP) (TC 8.A.1) family.

The protein localises to the cell inner membrane. In terms of biological role, forms an efflux pump with AaeB. In Yersinia enterocolitica serotype O:8 / biotype 1B (strain NCTC 13174 / 8081), this protein is p-hydroxybenzoic acid efflux pump subunit AaeA.